We begin with the raw amino-acid sequence, 224 residues long: Uracil-DNA glycosylase (224 aa).

The Proton acceptor role is filled by Asp62.

The protein belongs to the uracil-DNA glycosylase (UDG) superfamily. UNG family.

The protein localises to the cytoplasm. It catalyses the reaction Hydrolyzes single-stranded DNA or mismatched double-stranded DNA and polynucleotides, releasing free uracil.. Its function is as follows. Excises uracil residues from the DNA which can arise as a result of misincorporation of dUMP residues by DNA polymerase or due to deamination of cytosine. The protein is Uracil-DNA glycosylase of Aliivibrio fischeri (strain ATCC 700601 / ES114) (Vibrio fischeri).